A 524-amino-acid chain; its full sequence is Phosphoenolpyruvate carboxykinase (ATP) (524 aa).

Residues R52, Y188, and K194 each coordinate substrate. Residues K194, H213, and 229–237 (GLSGTGKTT) contribute to the ATP site. Residues K194 and H213 each coordinate Mn(2+). D250 contributes to the Mn(2+) binding site. 3 residues coordinate ATP: E278, R314, and T439. R314 is a binding site for substrate.

It belongs to the phosphoenolpyruvate carboxykinase (ATP) family. It depends on Mn(2+) as a cofactor.

The protein localises to the cytoplasm. It catalyses the reaction oxaloacetate + ATP = phosphoenolpyruvate + ADP + CO2. The protein operates within carbohydrate biosynthesis; gluconeogenesis. Its function is as follows. Involved in the gluconeogenesis. Catalyzes the conversion of oxaloacetate (OAA) to phosphoenolpyruvate (PEP) through direct phosphoryl transfer between the nucleoside triphosphate and OAA. This chain is Phosphoenolpyruvate carboxykinase (ATP), found in Campylobacter lari (strain RM2100 / D67 / ATCC BAA-1060).